Consider the following 213-residue polypeptide: LexA repressor (213 aa).

A DNA-binding region (H-T-H motif) is located at residues 27–47 (QTEIARAFGFKGVRAAQYHLE). Active-site for autocatalytic cleavage activity residues include Ser-133 and Lys-170.

Belongs to the peptidase S24 family. Homodimer.

It carries out the reaction Hydrolysis of Ala-|-Gly bond in repressor LexA.. Its function is as follows. Represses a number of genes involved in the response to DNA damage (SOS response), including recA and lexA. In the presence of single-stranded DNA, RecA interacts with LexA causing an autocatalytic cleavage which disrupts the DNA-binding part of LexA, leading to derepression of the SOS regulon and eventually DNA repair. The sequence is that of LexA repressor from Xanthomonas campestris.